A 716-amino-acid chain; its full sequence is Polycystin-2 (716 aa).

Basic and acidic residues-rich tracts occupy residues methionine 1 to tryptophan 10 and methionine 30 to lysine 41. The segment at methionine 1 to alanine 44 is disordered. Residues methionine 1–arginine 72 are Cytoplasmic-facing. The chain crosses the membrane as a helical span at residues serine 73–alanine 93. Residues glutamine 94–methionine 324 are Extracellular-facing. Residues asparagine 150 and asparagine 177 are each glycosylated (N-linked (GlcNAc...) asparagine). Cysteine 180 and cysteine 193 are oxidised to a cystine. Residues isoleucine 325 to isoleucine 345 traverse the membrane as a helical segment. The Cytoplasmic segment spans residues glycine 346–glutamine 355. A helical transmembrane segment spans residues phenylalanine 356–valine 376. Asparagine 377 carries N-linked (GlcNAc...) asparagine glycosylation. The Extracellular segment spans residues asparagine 377–tyrosine 409. A helical transmembrane segment spans residues leucine 410–valine 430. Over asparagine 431–aspartate 447 the chain is Cytoplasmic. A helical membrane pass occupies residues isoleucine 448–leucine 468. The Extracellular portion of the chain corresponds to cysteine 469–asparagine 482. Residues serine 483–phenylalanine 497 constitute an intramembrane region (pore-forming). Topologically, residues serine 498–alanine 510 are extracellular. The chain crosses the membrane as a helical span at residues phenylalanine 511–isoleucine 531. The Cytoplasmic portion of the chain corresponds to asparagine 532 to glutamate 716. Position 534 is a phosphoserine; by CK2 (serine 534). Positions glutamate 613 to aspartate 680 form a coiled coil. The segment at arginine 696–glutamate 716 is disordered.

This sequence belongs to the polycystin family. Post-translationally, phosphorylated. CK2 (kin-3 and kin-10) and calcineurin act antagonistically to regulate the phosphorylation state. Exclusively expressed in a subset of 3 categories of adult male sensory neurons: ray neurons, hook neurons and head cephalic (CEM) neurons. Expressed in the male tail.

The protein localises to the cell membrane. It localises to the cell projection. The protein resides in the cilium membrane. It is found in the cilium. Its subcellular location is the axon. The protein localises to the dendrite. It localises to the perikaryon. The protein resides in the endoplasmic reticulum membrane. Functionally, functions as a calcium permeable cation channel. Required for 2 aspects of male mating behavior: response to hermaphrodite contact and vulva location. Acts in the same pathway as lov-1 and atp-2 in response behavior. The sequence is that of Polycystin-2 from Caenorhabditis elegans.